The following is a 259-amino-acid chain: Imidazole glycerol phosphate synthase subunit HisF (259 aa).

Residues D11 and D130 contribute to the active site.

Belongs to the HisA/HisF family. Heterodimer of HisH and HisF.

The protein localises to the cytoplasm. It catalyses the reaction 5-[(5-phospho-1-deoxy-D-ribulos-1-ylimino)methylamino]-1-(5-phospho-beta-D-ribosyl)imidazole-4-carboxamide + L-glutamine = D-erythro-1-(imidazol-4-yl)glycerol 3-phosphate + 5-amino-1-(5-phospho-beta-D-ribosyl)imidazole-4-carboxamide + L-glutamate + H(+). It participates in amino-acid biosynthesis; L-histidine biosynthesis; L-histidine from 5-phospho-alpha-D-ribose 1-diphosphate: step 5/9. IGPS catalyzes the conversion of PRFAR and glutamine to IGP, AICAR and glutamate. The HisF subunit catalyzes the cyclization activity that produces IGP and AICAR from PRFAR using the ammonia provided by the HisH subunit. In Solidesulfovibrio magneticus (strain ATCC 700980 / DSM 13731 / RS-1) (Desulfovibrio magneticus), this protein is Imidazole glycerol phosphate synthase subunit HisF.